A 398-amino-acid chain; its full sequence is MDTALPSVLIGGGLSVSVSISTATKAGSQSISSHLSTSSLRLTARHRNRRRLPLLASSSESPPAQLAAASTESQSRSSRWVVVMDTPPAAAGGSGVSRAEAVDYYAATLAQVVGSEKEAQMRICEASWDGTYEFRCEIDEDASKELAKMPGVLSVQLDMGNKSEKDNHSLSLSTANLVSISDGASTSSSGKNEFWLVRMEKPGVEVVTKAQMVDHYTQILMKVLGNEQDAQVSIYHVSWDRDYGFCCHIDEECAKELADVPGVLSVQPDTNFGSDNKNYKGDDGVKSSEGTGAVDIKTKRLFVTGLSFYTSEKTLRAAFEPFGELVEVKIIMDRISKRSKGYAFVEYTTEEAGGAALKAMNGQIINGWMIVVDVAKTRSRDRLSGGSNQAFRPHYQAR.

Residues 1–88 (MDTALPSVLI…RWVVVMDTPP (88 aa)) constitute a chloroplast transit peptide. Residues 54–70 (LLASSSESPPAQLAAAS) show a composition bias toward low complexity. The segment at 54 to 79 (LLASSSESPPAQLAAASTESQSRSSR) is disordered. In terms of domain architecture, RRM spans 299 to 377 (KRLFVTGLSF…WMIVVDVAKT (79 aa)).

The protein localises to the plastid. Its subcellular location is the chloroplast. Functionally, involved in C-to-U editing of chloroplastic RNA. Functions as major chloroplastic editing factor. Controls a majority of the chloroplastic editing sites. The sequence is that of Organelle RRM domain-containing protein 1, chloroplastic (ORRM1) from Zea mays (Maize).